The chain runs to 268 residues: MNGIYALQQTFVKFSLLALYHRLFWVNRHFVRSVWLVGIVQGCWGIAILLVHIFLCTPMEKIWTPWMVEGTCVDVNTLFAIYEALNSVLDFIVAGLAIWMLPSLQIRKSTRWHLAGLFVLGAFSGFIGIIKIVEAYDSAQRNFQAVIWNVVQMSISIICCCAPIYRSILPKMGMSSIPSWASWSLRGSSRRSKAVASTADGTSKFSMRSYQGEGKAGGTSVSGNWINLDGSSQRALAWVDAESHGKDQSTYQDIPMGRMKVERSVEVI.

Helical transmembrane passes span 34 to 54, 78 to 98, 113 to 133, and 145 to 165; these read VWLV…VHIF, LFAI…GLAI, HLAG…IKIV, and AVIW…APIY.

It belongs to the SAT4 family.

It is found in the membrane. Its pathway is mycotoxin biosynthesis. Its function is as follows. Part of the satratoxin SC1 cluster involved in the biosynthesis of satratoxins, trichothecene mycotoxins that are associated with human food poisonings. Satratoxins are suggested to be made by products of multiple gene clusters (SC1, SC2 and SC3) that encode 21 proteins in all, including polyketide synthases, acetyltransferases, and other enzymes expected to modify the trichothecene skeleton. SC1 encodes 10 proteins, SAT1 to SAT10. The largest are SAT8, which encodes a putative polyketide synthase (PKS) with a conventional non-reducing architecture, and SAT10, a putative protein containing four ankyrin repeats and thus may be involved in protein scaffolding. The putative short-chain reductase SAT3 may assist the PKS in some capacity. SAT6 contains a secretory lipase domain and acts probably as a trichothecene esterase. SAT5 encodes a putative acetyltransferase, and so, with SAT6, may affect endogenous protection from toxicity. The probable transcription factor SAT9 may regulate the expression of the SC1 cluster. SC2 encodes proteins SAT11 to SAT16, the largest of which encodes the putative reducing PKS SAT13. SAT11 is a cytochrome P450 monooxygenase, while SAT14 and SAT16 are probable acetyltransferases. The SC2 cluster may be regulated by the transcription factor SAT15. SC3 is a small cluster that encodes 5 proteins, SAT17 to SAT21. SAT21 is a putative MFS-type transporter which may have a role in exporting secondary metabolites. The four other proteins putatively encoded in SC3 include the taurine hydroxylase-like protein SAT17, the O-methyltransferase SAT18, the acetyltransferase SAT19, and the Cys6-type zinc finger SAT20, the latter being probably involved in regulation of SC3 expression. The sequence is that of Satratoxin biosynthesis SC1 cluster protein 4 from Stachybotrys chartarum (strain CBS 109288 / IBT 7711) (Toxic black mold).